The following is a 187-amino-acid chain: COMM domain-containing protein 1 (187 aa).

A COMM domain is found at 112 to 186; that stretch reads SLQKISWRID…SIQKHLQAKS (75 aa).

This sequence belongs to the COMM domain-containing protein 1 family. Component of the commander complex consisting of the CCC subcomplex and the retriever subcomplex.

Its function is as follows. Scaffold protein in the commander complex that is essential for endosomal recycling of transmembrane cargos; the commander complex is composed of the CCC subcomplex and the retriever subcomplex. The protein is COMM domain-containing protein 1 (commd1) of Dictyostelium discoideum (Social amoeba).